A 621-amino-acid polypeptide reads, in one-letter code: Hemolysin ahh1 (621 aa).

The signal sequence occupies residues 1–30; it reads MKNKKPRKFITQAPTLSLLALALLAGSVQA. Residues 491 to 610 form the Ricin B-type lectin domain; it reads RPVNLQLGGF…QNVSVRTLTS (120 aa).

Belongs to the HlyA hemolysin family.

In terms of biological role, bacterial hemolysins are exotoxins that attack blood cell membranes and cause cell rupture by mechanisms not clearly defined. This chain is Hemolysin ahh1 (ahh1), found in Aeromonas hydrophila subsp. hydrophila (strain ATCC 7966 / DSM 30187 / BCRC 13018 / CCUG 14551 / JCM 1027 / KCTC 2358 / NCIMB 9240 / NCTC 8049).